The chain runs to 150 residues: Large ribosomal subunit protein bL9 (150 aa).

Belongs to the bacterial ribosomal protein bL9 family.

Functionally, binds to the 23S rRNA. The polypeptide is Large ribosomal subunit protein bL9 (Burkholderia mallei (strain NCTC 10247)).